Consider the following 329-residue polypeptide: Homeobox protein Nkx-3.2 (329 aa).

The tract at residues 107 to 188 is disordered; that stretch reads GLGSPCGGAP…PDPSPPDEDP (82 aa). Over residues 110 to 124 the composition is skewed to gly residues; that stretch reads SPCGGAPGAGAGGEP. The segment covering 138–160 has biased composition (basic and acidic residues); it reads ELGRPGDIGERKKQRPLEARAKG. A DNA-binding region (homeobox) is located at residues 202 to 261; it reads KKRSRAAFSHAQVFELERRFNHQRYLSGPERADLAASLKLTETQVKIWFQNRRYKTKRRQ.

Belongs to the NK-3 homeobox family. First expressed in developing facial cartilage in early tailbud embryos, with expression localized to the basihyobranchial, palatoquadrate and possibly Meckel's cartilages. Shortly after, a second area of expression is seen in the musculature of the anterior gut. During late embryogenesis, gut expression extends into hindgut tissues. In adults, expressed at a high level in the kidney, pancreas, spleen and stomach and at a slightly lower level in the intestine, skeletal muscle and tongue. Adult heart, liver and lung show little or no expression.

Its subcellular location is the nucleus. The sequence is that of Homeobox protein Nkx-3.2 (nkx3-2) from Xenopus laevis (African clawed frog).